We begin with the raw amino-acid sequence, 612 residues long: Dihydroxy-acid dehydratase (612 aa).

Aspartate 81 provides a ligand contact to Mg(2+). Cysteine 122 provides a ligand contact to [2Fe-2S] cluster. The Mg(2+) site is built by aspartate 123 and lysine 124. N6-carboxylysine is present on lysine 124. Residue cysteine 195 participates in [2Fe-2S] cluster binding. Glutamate 491 is a Mg(2+) binding site. Serine 517 acts as the Proton acceptor in catalysis.

This sequence belongs to the IlvD/Edd family. As to quaternary structure, homodimer. Requires [2Fe-2S] cluster as cofactor. Mg(2+) is required as a cofactor.

The enzyme catalyses (2R)-2,3-dihydroxy-3-methylbutanoate = 3-methyl-2-oxobutanoate + H2O. The catalysed reaction is (2R,3R)-2,3-dihydroxy-3-methylpentanoate = (S)-3-methyl-2-oxopentanoate + H2O. It participates in amino-acid biosynthesis; L-isoleucine biosynthesis; L-isoleucine from 2-oxobutanoate: step 3/4. The protein operates within amino-acid biosynthesis; L-valine biosynthesis; L-valine from pyruvate: step 3/4. Its function is as follows. Functions in the biosynthesis of branched-chain amino acids. Catalyzes the dehydration of (2R,3R)-2,3-dihydroxy-3-methylpentanoate (2,3-dihydroxy-3-methylvalerate) into 2-oxo-3-methylpentanoate (2-oxo-3-methylvalerate) and of (2R)-2,3-dihydroxy-3-methylbutanoate (2,3-dihydroxyisovalerate) into 2-oxo-3-methylbutanoate (2-oxoisovalerate), the penultimate precursor to L-isoleucine and L-valine, respectively. This chain is Dihydroxy-acid dehydratase, found in Rhizobium leguminosarum bv. trifolii (strain WSM2304).